Here is a 308-residue protein sequence, read N- to C-terminus: 2-methylisocitrate lyase (308 aa).

Ser54–Gly56 contributes to the substrate binding site. Mg(2+) is bound by residues Asp94 and Asp96. Residues Cys131–Gly132, Arg166, Glu196, Asn224–Thr226, Arg255, and Arg284 contribute to the substrate site.

The protein belongs to the isocitrate lyase/PEP mutase superfamily. Methylisocitrate lyase family. Homotetramer; dimer of dimers. Mg(2+) serves as cofactor.

The catalysed reaction is (2S,3R)-3-hydroxybutane-1,2,3-tricarboxylate = pyruvate + succinate. The protein operates within organic acid metabolism; propanoate degradation. Its function is as follows. Involved in the catabolism of short chain fatty acids (SCFA) via the 2-methylcitrate cycle I (propionate degradation route). Catalyzes the thermodynamically favored C-C bond cleavage reaction of (2R,3S)-2-methylisocitrate to yield pyruvate and succinate via an alpha-carboxy-carbanion intermediate. The polypeptide is 2-methylisocitrate lyase (Vibrio cholerae serotype O1 (strain ATCC 39315 / El Tor Inaba N16961)).